We begin with the raw amino-acid sequence, 32 residues long: NGWNENKNYILIGSAAWAGLVLLVGTLNYLVI.

A helical membrane pass occupies residues 12-32 (IGSAAWAGLVLLVGTLNYLVI).

It belongs to the PsbZ family. In terms of assembly, PSII is composed of 1 copy each of membrane proteins PsbA, PsbB, PsbC, PsbD, PsbE, PsbF, PsbH, PsbI, PsbJ, PsbK, PsbL, PsbM, PsbT, PsbY, PsbZ, Psb30/Ycf12, at least 3 peripheral proteins of the oxygen-evolving complex and a large number of cofactors. It forms dimeric complexes.

The protein localises to the plastid. The protein resides in the chloroplast thylakoid membrane. May control the interaction of photosystem II (PSII) cores with the light-harvesting antenna, regulates electron flow through the 2 photosystem reaction centers. PSII is a light-driven water plastoquinone oxidoreductase, using light energy to abstract electrons from H(2)O, generating a proton gradient subsequently used for ATP formation. The sequence is that of Photosystem II reaction center protein Z from Euglena anabaena (Euglenaria anabaena).